A 538-amino-acid polypeptide reads, in one-letter code: GSY2-interacting protein PIG2 (538 aa).

Phosphoserine occurs at positions 162, 196, 296, and 304. One can recognise a CBM21 domain in the interval 384-508; it reads LNLSRGRPVF…NNDSANYKID (125 aa).

Its function is as follows. Interacts with glycogen synthase 2 (GSY2); possibly also interacts with phosphatase 1 (GLC7). This Saccharomyces cerevisiae (strain ATCC 204508 / S288c) (Baker's yeast) protein is GSY2-interacting protein PIG2 (PIG2).